A 610-amino-acid chain; its full sequence is Estrogen receptor beta-2 (610 aa).

The modulating stretch occupies residues 1 to 170 (MSSSTGPAPA…GILGKGDTHF (170 aa)). 2 NR C4-type zinc fingers span residues 171–191 (CAVCHDYASGYHYGVWSCEGC) and 207–231 (CPATNQCTIDKSRRKSCQACRLRKC). The segment at residues 171–236 (CAVCHDYASG…RLRKCYEVGM (66 aa)) is a DNA-binding region (nuclear receptor). Residues 302–538 (SPEQLVNCIL…DLLLEMLDAN (237 aa)) enclose the NR LBD domain. The disordered stretch occupies residues 566-596 (HTSKQQPALKESNQDTRHSPQAEGTVDKTLH). A compositionally biased stretch (basic and acidic residues) spans 577–596 (SNQDTRHSPQAEGTVDKTLH).

The protein belongs to the nuclear hormone receptor family. NR3 subfamily. As to quaternary structure, binds DNA as a homodimer. Can form a heterodimer with ER-alpha. Predominantly expressed in pituitary, telencephalon and hypothalamus as well as in the liver.

It is found in the nucleus. Binds estrogens with an affinity similar to that of ER-alpha, and activates expression of reporter genes containing estrogen response elements (ERE) in an estrogen-dependent manner. The chain is Estrogen receptor beta-2 (esr2b) from Carassius auratus (Goldfish).